The chain runs to 228 residues: uncharacterized protein (228 aa).

Residues 196–228 (VKITELLDKAKISINDLNKTIEKLNETVNKYHG) adopt a coiled-coil conformation.

This is an uncharacterized protein from Acanthamoeba polyphaga (Amoeba).